The primary structure comprises 1597 residues: Collagen alpha-1(XVII) chain (1597 aa).

Disordered regions lie at residues 1 to 155 and 168 to 188; these read MDVT…PSTR and GSRS…PIPK. Residues 1–468 lie on the Cytoplasmic side of the membrane; sequence MDVTKKNKRD…CGSCCSWWKW (468 aa). Positions 1-567 are nonhelical region (NC16A); that stretch reads MDVTKKNKRD…AEQENGNLRG (567 aa). The span at 9-19 shows a compositional bias: basic and acidic residues; sequence RDGSEVTERII. Polar residues-rich tracts occupy residues 58–96, 111–120, and 170–184; these read THGS…SPGS, EGSSSGNSSP, and RSAS…SNTL. The interval 146 to 231 is necessary for interaction with DST and for the recruitment of DST to hemidesmosome; the sequence is RLQSASPSTR…WSSTLPAGSS (86 aa). Residues 469-489 traverse the membrane as a helical; Signal-anchor for type II membrane protein segment; that stretch reads LLGLLLTWLLLLGLLFGLIAL. Topologically, residues 490-1597 are extracellular; that stretch reads AEEVRALKAR…KGGSWRLTSY (1108 aa). 5 disordered regions span residues 562–857, 907–927, 970–1041, 1289–1316, and 1344–1394; these read NGNL…SSSS, LRGP…FRVR, LETY…ISSS, TAGV…VSGA, and FIVG…SSMG. The segment at 568–1572 is triple-helical region; sequence SPGPKGDMGS…ELPLEEQPLA (1005 aa). A compositionally biased stretch (low complexity) spans 604–632; the sequence is PKGQKGSVGEPGMEGPMGQRGREGPMGPR. Positions 665 to 674 are enriched in gly residues; that stretch reads GPKGSGGSPG. Composition is skewed to low complexity over residues 730–748 and 774–796; these read PGAV…AGPD and DPGK…PGRP. Over residues 820-838 the composition is skewed to pro residues; that stretch reads PGPPGPPGAMGPPGPPGAP. Residues 847–857 are compositionally biased toward low complexity; sequence AGESFMGSSSS. 5 stretches are compositionally biased toward pro residues: residues 910 to 922, 977 to 986, 1023 to 1035, 1296 to 1310, and 1348 to 1357; these read PPGP…PPDL, PPGPPGPPGP, PGPP…PGPP, PGPP…PRGP, and PPGPPGPQGP. Residues 1377–1393 are compositionally biased toward low complexity; the sequence is SSHSASVSRGSSYSSSM. The N-linked (GlcNAc...) asparagine glycan is linked to Asn-1493. The segment at 1531–1566 is disordered; that stretch reads GHPALEGTREKKETKVTKSMRGGEREASPSSHELPL. Basic and acidic residues predominate over residues 1537–1557; it reads GTREKKETKVTKSMRGGEREA. The nonhelical region (NC1) stretch occupies residues 1573–1597; sequence SVLAMAYGVHVKISPKGGSWRLTSY.

Homotrimers of alpha 1(XVII)chains. Interacts (via cytoplasmic region) with ITGB4 (via cytoplasmic region). Interacts (via cytoplasmic region) with DST (via N-terminus). Interacts (via N-terminus) with PLEC. Interacts (via cytoplasmic region) with DSP. In terms of processing, the intracellular/endo domain is disulfide-linked. Post-translationally, prolines at the third position of the tripeptide repeating unit (G-X-Y) are hydroxylated in some or all of the chains. The ectodomain is shedded from the surface of keratinocytes resulting in a 120-kDa soluble form, also named as 120 kDa linear IgA disease antigen homolog. The shedding is mediated by membrane-bound metalloproteases. As to expression, upper lamina lucidalhemidesmosome.

Its subcellular location is the cell junction. The protein localises to the hemidesmosome. It localises to the membrane. The protein resides in the secreted. It is found in the extracellular space. Its subcellular location is the extracellular matrix. The protein localises to the basement membrane. Its function is as follows. The 120 kDa linear IgA disease antigen homolog is an anchoring filament component involved in dermal-epidermal cohesion. The chain is Collagen alpha-1(XVII) chain (COL17A1) from Canis lupus familiaris (Dog).